The following is a 305-amino-acid chain: Glutaminase (305 aa).

7 residues coordinate substrate: Ser-63, Asn-113, Glu-158, Asn-165, Tyr-189, Tyr-241, and Val-259.

The protein belongs to the glutaminase family. In terms of assembly, homotetramer.

The enzyme catalyses L-glutamine + H2O = L-glutamate + NH4(+). The sequence is that of Glutaminase from Aliarcobacter butzleri (strain RM4018) (Arcobacter butzleri).